Here is a 133-residue protein sequence, read N- to C-terminus: Protein msa (133 aa).

Transmembrane regions (helical) follow at residues 3–23, 27–47, 55–75, and 103–123; these read YLIL…AIGL, ILAA…ILFF, YIFF…VHLM, and FGFD…IILY.

Its subcellular location is the cell membrane. Its function is as follows. Accessory element involved in the expression of sarA and several virulence factors. Modulates SarA production and/or function in a strain-dependent manner. Affects the transcription of the accessory gene regulator (agr) and genes encoding virulence factors including alpha toxin (hla) and protein A (spa). This Staphylococcus aureus (strain bovine RF122 / ET3-1) protein is Protein msa (msa).